A 131-amino-acid chain; its full sequence is NADH-quinone oxidoreductase subunit I 2 (131 aa).

4Fe-4S ferredoxin-type domains lie at 42-71 and 81-110; these read LKVS…VEAG and ERYE…MTGE. [4Fe-4S] cluster is bound by residues cysteine 51, cysteine 54, cysteine 57, cysteine 61, cysteine 90, cysteine 93, cysteine 96, and cysteine 100.

It belongs to the complex I 23 kDa subunit family. NDH-1 is composed of 14 different subunits. Subunits NuoA, H, J, K, L, M, N constitute the membrane sector of the complex. [4Fe-4S] cluster is required as a cofactor.

It localises to the cell inner membrane. The enzyme catalyses a quinone + NADH + 5 H(+)(in) = a quinol + NAD(+) + 4 H(+)(out). Its function is as follows. NDH-1 shuttles electrons from NADH, via FMN and iron-sulfur (Fe-S) centers, to quinones in the respiratory chain. The immediate electron acceptor for the enzyme in this species is believed to be ubiquinone. Couples the redox reaction to proton translocation (for every two electrons transferred, four hydrogen ions are translocated across the cytoplasmic membrane), and thus conserves the redox energy in a proton gradient. In Geobacter metallireducens (strain ATCC 53774 / DSM 7210 / GS-15), this protein is NADH-quinone oxidoreductase subunit I 2.